Reading from the N-terminus, the 1353-residue chain is MASSPHQQLLHHHSTEVSCDSSGDSNSVRVKINPKQLSSNTHPKHCKYSISSSCSSSGDSGGLPRRVGGGGRLRRQKKLPQLFERASSRWWDPKFDSMNLEEACLERCFPQTQRRFRYALFYVGFACLLWSIYFAVHMKSKVIVMVVPALCFLVVCVGFFLFTFTKLYARHYAWTSLALTLLVFALTLAAQFQVWTPLSGRVDSSNHTLTATPADTCLSQVGSFSICIEVLLLLYTVMQLPLYLSLFLGVVYSVLFETFGYHFRNEDCYPSPGPGALHWELLSRALLHVCIHAIGIHLFVMSQVRSRSTFLKVGQSIMHGKDLEVEKALKERMIHSVMPRIIADDLMKQGDEESENSVKRHATSSPKNRKKKSSIQKAPIAFRPFKMQQIEEVSILFADIVGFTKMSANKSAHALVGLLNDLFGRFDRLCEQTKCEKISTLGDCYYCVAGCPEPRADHAYCCIEMGLGMIKAIEQFCQEKKEMVNMRVGVHTGTVLCGILGMRRFKFDVWSNDVNLANLMEQLGVAGKVHISEATAKYLDDRYEMEDGRVIERLGQSVVADQLKGLKTYLISGQRAKESHCSCAEALLSGFEVIDDSRESSGPRGQGTASPGSVSDLAQTVKTFDNLKTCPSCGITFAPKSEAGAEGGTVQNGCQDEPKTSTKASGGPNSKTQNGLLSPPAEEKLTNSQTSLCEILQEKGRWAGVSLDQSALLPLRFKNIREKTDAHFVDVIKEDSLMKDYFFKPPINQFSLNFLDQELERSYRTSYQEEVIKNSPVKTFASATFSSLLDVFLSTTVFLILSITCFLKYGATATPPPPAALAVFGADLLLEVLSLIVSIRMVFFLEDVMTCTKWLLEWIAGWLPRHCIGAILVSLPALAVYSHITSEFETNIHVTMFTGSAVLVAVVHYCNFCQLSSWMRSSLATIVGAGLLLLLHISLCQDSSIVMSPLDSAQNFSAQRNPCNSSVLQDGRRPASLIGKELILTFFLLLLLVWFLNREFEVSYRLHYHGDVEADLHRTKIQSMRDQADWLLRNIIPYHVAEQLKVSQTYSKNHDSGGVIFASIVNFSEFYEENYEGGKECYRVLNELIGDFDELLSKPDYNSIEKIKTIGATYMAASGLNTAQCQEGGHPQEHLRILFEFAKEMMRVVDDFNNNMLWFNFKLRVGFNHGPLTAGVIGTTKLLYDIWGDTVNIASRMDTTGVECRIQVSEESYRVLSKMGYDFDYRGTVNVKGKGQMKTYLYPKCTDNGVVPQHQLSISPDIRVQVDGSIGRSPTDEIANLVPSVQYSDKASLGSDDSTQAKEARLSSKRSWREPVKAEERFPFGKAIEKDSCEDIGVEEASELSKLNVSKSV.

Disordered stretches follow at residues 1–27 (MASS…DSNS) and 51–73 (SSSC…GGRL). At 1–117 (MASSPHQQLL…CFPQTQRRFR (117 aa)) the chain is on the cytoplasmic side. A compositionally biased stretch (polar residues) spans 16-27 (EVSCDSSGDSNS). The span at 51–66 (SSSCSSSGDSGGLPRR) shows a compositional bias: low complexity. The chain crosses the membrane as a helical span at residues 118 to 138 (YALFYVGFACLLWSIYFAVHM). The Extracellular segment spans residues 139 to 141 (KSK). The helical transmembrane segment at 142–162 (VIVMVVPALCFLVVCVGFFLF) threads the bilayer. The Cytoplasmic segment spans residues 163 to 171 (TFTKLYARH). The helical transmembrane segment at 172 to 192 (YAWTSLALTLLVFALTLAAQF) threads the bilayer. Topologically, residues 193-215 (QVWTPLSGRVDSSNHTLTATPAD) are extracellular. The N-linked (GlcNAc...) asparagine glycan is linked to asparagine 206. Residues 216-235 (TCLSQVGSFSICIEVLLLLY) form a helical membrane-spanning segment. Residues 236 to 241 (TVMQLP) are Cytoplasmic-facing. The helical transmembrane segment at 242–259 (LYLSLFLGVVYSVLFETF) threads the bilayer. Residues 260-280 (GYHFRNEDCYPSPGPGALHWE) lie on the Extracellular side of the membrane. Residues 281-301 (LLSRALLHVCIHAIGIHLFVM) traverse the membrane as a helical segment. Over 302-786 (SQVRSRSTFL…VKTFASATFS (485 aa)) the chain is Cytoplasmic. The interval 349-375 (QGDEESENSVKRHATSSPKNRKKKSSI) is disordered. The span at 359-374 (KRHATSSPKNRKKKSS) shows a compositional bias: basic residues. Residues aspartate 399, isoleucine 400, and aspartate 443 each contribute to the Mg(2+) site. Residues 399–404 (DIVGFT), 441–443 (LGD), and arginine 487 contribute to the ATP site. 2 disordered regions span residues 596-615 (DSRE…GSVS) and 641-685 (SEAG…EEKL). Residues serine 610 and serine 613 each carry the phosphoserine modification. The span at 661-676 (STKASGGPNSKTQNGL) shows a compositional bias: polar residues. Phosphoserine is present on residues serine 688, serine 691, and serine 706. The helical transmembrane segment at 787-807 (SLLDVFLSTTVFLILSITCFL) threads the bilayer. Topologically, residues 808-818 (KYGATATPPPP) are extracellular. A helical membrane pass occupies residues 819-839 (AALAVFGADLLLEVLSLIVSI). Residues 840–867 (RMVFFLEDVMTCTKWLLEWIAGWLPRHC) are Cytoplasmic-facing. A helical transmembrane segment spans residues 868–888 (IGAILVSLPALAVYSHITSEF). The Extracellular segment spans residues 889-891 (ETN). A helical transmembrane segment spans residues 892–912 (IHVTMFTGSAVLVAVVHYCNF). The Cytoplasmic portion of the chain corresponds to 913–920 (CQLSSWMR). The chain crosses the membrane as a helical span at residues 921–941 (SSLATIVGAGLLLLLHISLCQ). Over 942 to 975 (DSSIVMSPLDSAQNFSAQRNPCNSSVLQDGRRPA) the chain is Extracellular. 2 N-linked (GlcNAc...) asparagine glycosylation sites follow: asparagine 955 and asparagine 964. Residues 976 to 996 (SLIGKELILTFFLLLLLVWFL) form a helical membrane-spanning segment. Over 997 to 1353 (NREFEVSYRL…LSKLNVSKSV (357 aa)) the chain is Cytoplasmic. ATP is bound by residues lysine 1108, 1185 to 1187 (DIW), 1192 to 1196 (NIASR), and lysine 1232. Residues serine 1257, serine 1259, serine 1295, serine 1307, and serine 1332 each carry the phosphoserine modification. The disordered stretch occupies residues 1290–1314 (KASLGSDDSTQAKEARLSSKRSWRE). Basic and acidic residues predominate over residues 1299–1314 (TQAKEARLSSKRSWRE).

The protein belongs to the adenylyl cyclase class-4/guanylyl cyclase family. It depends on Mg(2+) as a cofactor. Mn(2+) serves as cofactor. As to expression, detected in brain, spleen, lung, liver and testis (at protein level). Detected in brain, especially in hippocampus, cerebellum and neocortex. Found in decreasing order in skeletal muscle, heart, adrenal gland, ovary and brain; and to a lesser extent, in kidney, liver, testis, lung, thymus and spleen.

The protein resides in the cell membrane. The catalysed reaction is ATP = 3',5'-cyclic AMP + diphosphate. With respect to regulation, insensitive to calcium/calmodulin, forskolin and somatostatin. Stimulated by beta-adrenergic receptor activation. Activity is down-regulated by calcium/calcineurin. Functionally, adenylyl cyclase that catalyzes the formation of the signaling molecule cAMP in response to activation of G protein-coupled receptors. Contributes to signaling cascades activated by CRH (corticotropin-releasing factor), corticosteroids and by beta-adrenergic receptors. The chain is Adenylate cyclase type 9 (Adcy9) from Mus musculus (Mouse).